The chain runs to 99 residues: Malonate decarboxylase acyl carrier protein (99 aa).

Ser-25 carries the post-translational modification O-(phosphoribosyl dephospho-coenzyme A)serine.

This sequence belongs to the MdcC family. Post-translationally, covalently binds the prosthetic group of malonate decarboxylase.

It is found in the cytoplasm. Subunit of malonate decarboxylase, it is an acyl carrier protein to which acetyl and malonyl thioester residues are bound via a 2'-(5''-phosphoribosyl)-3'-dephospho-CoA prosthetic group and turn over during the catalytic mechanism. The chain is Malonate decarboxylase acyl carrier protein from Pseudomonas syringae pv. tomato (strain ATCC BAA-871 / DC3000).